A 235-amino-acid chain; its full sequence is tRNA pseudouridine synthase B (235 aa).

The active-site Nucleophile is the aspartate 45.

Belongs to the pseudouridine synthase TruB family. Type 1 subfamily.

The catalysed reaction is uridine(55) in tRNA = pseudouridine(55) in tRNA. In terms of biological role, responsible for synthesis of pseudouridine from uracil-55 in the psi GC loop of transfer RNAs. The sequence is that of tRNA pseudouridine synthase B from Chlamydia pneumoniae (Chlamydophila pneumoniae).